We begin with the raw amino-acid sequence, 463 residues long: Chromosomal replication initiator protein DnaA (463 aa).

A domain I, interacts with DnaA modulators region spans residues 1–83 (MSTNQIILTD…LQLFQHYNNT (83 aa)). A domain II region spans residues 83 to 124 (TIKSIEIITKELPGTTQTVTELPTKTFADIGSSELNSENIFS). The tract at residues 125 to 343 (TLDARFTFDN…GALNKVIAHS (219 aa)) is domain III, AAA+ region. Positions 171, 173, 174, and 175 each coordinate ATP. The segment at 344-463 (NFTLKEITLE…INLLMKILQN (120 aa)) is domain IV, binds dsDNA.

It belongs to the DnaA family. In terms of assembly, oligomerizes as a right-handed, spiral filament on DNA at oriC.

Its subcellular location is the cytoplasm. In terms of biological role, plays an essential role in the initiation and regulation of chromosomal replication. ATP-DnaA binds to the origin of replication (oriC) to initiate formation of the DNA replication initiation complex once per cell cycle. Binds the DnaA box (a 9 base pair repeat at the origin) and separates the double-stranded (ds)DNA. Forms a right-handed helical filament on oriC DNA; dsDNA binds to the exterior of the filament while single-stranded (ss)DNA is stabiized in the filament's interior. The ATP-DnaA-oriC complex binds and stabilizes one strand of the AT-rich DNA unwinding element (DUE), permitting loading of DNA polymerase. After initiation quickly degrades to an ADP-DnaA complex that is not apt for DNA replication. Binds acidic phospholipids. The polypeptide is Chromosomal replication initiator protein DnaA (Rickettsia peacockii (strain Rustic)).